The following is a 126-amino-acid chain: Protein ApaG (126 aa).

One can recognise an ApaG domain in the interval 2–126 (SDSRYKVDVS…FRLAVPGSLH (125 aa)).

In Pseudomonas syringae pv. tomato (strain ATCC BAA-871 / DC3000), this protein is Protein ApaG.